Reading from the N-terminus, the 124-residue chain is Fluoride-specific ion channel FluC 1 (124 aa).

Transmembrane regions (helical) follow at residues 7 to 27, 32 to 52, 58 to 78, and 93 to 113; these read IQSK…LGAI, LNNY…IVGL, IQFF…GWIL, and AGLI…TFWI. Na(+)-binding residues include Gly68 and Thr71.

Belongs to the fluoride channel Fluc/FEX (TC 1.A.43) family.

The protein localises to the cell inner membrane. The catalysed reaction is fluoride(in) = fluoride(out). Its activity is regulated as follows. Na(+) is not transported, but it plays an essential structural role and its presence is essential for fluoride channel function. Fluoride-specific ion channel. Important for reducing fluoride concentration in the cell, thus reducing its toxicity. The polypeptide is Fluoride-specific ion channel FluC 1 (Prochlorococcus marinus (strain SARG / CCMP1375 / SS120)).